The sequence spans 338 residues: Phenylalanine--tRNA ligase alpha subunit (338 aa).

Glu252 serves as a coordination point for Mg(2+).

This sequence belongs to the class-II aminoacyl-tRNA synthetase family. Phe-tRNA synthetase alpha subunit type 1 subfamily. Tetramer of two alpha and two beta subunits. It depends on Mg(2+) as a cofactor.

It localises to the cytoplasm. The enzyme catalyses tRNA(Phe) + L-phenylalanine + ATP = L-phenylalanyl-tRNA(Phe) + AMP + diphosphate + H(+). The sequence is that of Phenylalanine--tRNA ligase alpha subunit from Fusobacterium nucleatum subsp. nucleatum (strain ATCC 25586 / DSM 15643 / BCRC 10681 / CIP 101130 / JCM 8532 / KCTC 2640 / LMG 13131 / VPI 4355).